A 151-amino-acid polypeptide reads, in one-letter code: Histone H2A.2.1 (151 aa).

At Met-1 the chain carries N-acetylmethionine. 2 disordered regions span residues 1 to 22 and 129 to 151; these read MDGS…KKSV and EKAE…PKKA. Short sequence motifs (SPKK motif) lie at residues 140 to 143 and 147 to 150; these read SPKK. Basic residues predominate over residues 140–151; that stretch reads SPKKTTKSPKKA.

This sequence belongs to the histone H2A family. The nucleosome is a histone octamer containing two molecules each of H2A, H2B, H3 and H4 assembled in one H3-H4 heterotetramer and two H2A-H2B heterodimers. The octamer wraps approximately 147 bp of DNA. Post-translationally, phosphorylated within its C-terminal part, probably at the SPKK motifs.

It is found in the nucleus. It localises to the chromosome. Its function is as follows. Core component of nucleosome. Nucleosomes wrap and compact DNA into chromatin, limiting DNA accessibility to the cellular machineries which require DNA as a template. Histones thereby play a central role in transcription regulation, DNA repair, DNA replication and chromosomal stability. DNA accessibility is regulated via a complex set of post-translational modifications of histones, also called histone code, and nucleosome remodeling. The sequence is that of Histone H2A.2.1 from Triticum aestivum (Wheat).